The primary structure comprises 96 residues: Putative pterin-4-alpha-carbinolamine dehydratase (96 aa).

The protein belongs to the pterin-4-alpha-carbinolamine dehydratase family.

The enzyme catalyses (4aS,6R)-4a-hydroxy-L-erythro-5,6,7,8-tetrahydrobiopterin = (6R)-L-erythro-6,7-dihydrobiopterin + H2O. The chain is Putative pterin-4-alpha-carbinolamine dehydratase from Synechocystis sp. (strain ATCC 27184 / PCC 6803 / Kazusa).